A 792-amino-acid chain; its full sequence is Phosphatidylinositol 4-phosphate 5-kinase type-1 sktl (792 aa).

Over residues M1–Q21 the composition is skewed to basic and acidic residues. 5 disordered regions span residues M1–T74, T105–G139, A423–E446, T577–A612, and A640–S714. 2 stretches are compositionally biased toward polar residues: residues Q52–P62 and T105–G131. The PIPK domain maps to Q155–V573. Positions S642–N658 are enriched in low complexity. Polar residues predominate over residues E678–D702.

Interacts with ash2 (via B30.2/SPRY domain); the interaction is direct and seems to be specific for ash2 isoform B.

The protein localises to the cytoplasm. The protein resides in the cell cortex. Its subcellular location is the nucleus. It localises to the chromosome. It is found in the apical cell membrane. The protein localises to the cell projection. The protein resides in the cilium. Its subcellular location is the flagellum membrane. The catalysed reaction is a 1,2-diacyl-sn-glycero-3-phospho-(1D-myo-inositol 4-phosphate) + ATP = a 1,2-diacyl-sn-glycero-3-phospho-(1D-myo-inositol-4,5-bisphosphate) + ADP + H(+). Catalyzes the phosphorylation of phosphatidylinositol 4-phosphate (PtdIns[4]P) to form phosphatidylinositol 4,5-bisphosphate (PtdIns[4,5]P(2)), a lipid second messenger that regulates several cellular processes such as signal transduction, vesicle trafficking, actin cytoskeleton dynamics, cell adhesion, and cell motility. PtdIns[4,5]P(2) can directly act as a second messenger or can be utilized as a precursor to generate other second messengers: inositol 1,4,5-trisphosphate (IP3), diacylglycerol (DAG) or phosphatidylinositol-3,4,5-trisphosphate (PtdIns[3,4,5]P(3)). Required for germline development during oogenesis. Sktl is the major phosphatidylinositol 4-phosphate 5-kinase responsible for enrichment of PtdIns[4,5]P(2) in the apical plasma membrane of the oocyte and follicular epithelium cells of the egg chamber during oogenesis. Involved in nuclear anchoring and microtubule organization required for targeted mRNA transport during maintenance of oocyte polarity. The PtdIns[4,5]P(2) produced by sktl is required for maintenance of cellular polarity, prevention of the epithelial-mesenchymal transition process, maintenance of adherens junctions and regulation of apical constriction, probably by affecting polarized cortical recruitment of PAR proteins and their effectors, including baz/bazooka, aPKC, par-1 and l(2)gl. Involved in actin cytoskeleton organization probably through PtdIns[4,5]P(2)-mediated regulation of Moe/Moesin phosphorylation. Involved in PtdIns[4,5]P(2)-mediated apical recruitment of the formin dia/diaphanous in tubular epithelial cells. Involved in anterodorsal cell morphogenesis and eggshell dorsal appendage formation, probably through regulation of apical constriction by PtdIns[4,5]P(2) during tubulogenesis. Required for cell viability or proliferation during wing and eye imaginal disk development. May be involved in cytoskeletal regulation during sensory bristle development. Together with mys/integrin beta localizes to the trailing edge of larval epidermal cells in a JNK signaling-dependent manner during wound healing and is required for setting up cell polarity and re-epithelialization. Required for polarization of elongating spermatid cysts possibly by generation of PtdIns[4,5]P(2) involved in mediating membrane association and orientation of the nucleus-basal body pair. Probably involved in PtdIns[4,5]P(2)-mediated recruitment of exocyst proteins that may mediate membrane addition during spermatid elongation. Involved in maintenance of specialised cell contacts known as slit diaphragms required for nephrocyte morphogenesis and function. Regulates nephrocyte endocytosis, possibly through PtdIns[4,5]P(2)-mediated recruitment of effector proteins. Not required for nervous system development or neurotransmitter release at the neuromuscular junction. Together with ash2 probably plays a role in maintenance of transcriptionally active chromatin through down-regulation of histone H1 hyperphosphorylation. This is Phosphatidylinositol 4-phosphate 5-kinase type-1 sktl from Drosophila melanogaster (Fruit fly).